The chain runs to 276 residues: Radial spoke head protein 9 homolog (276 aa).

The protein belongs to the flagellar radial spoke RSP9 family. Component of the axonemal radial spoke 1 (RS1) and 2 (RS2) complexes, at least composed of spoke head proteins RSPH1, RSPH3, RSPH9 and the cilia-specific component RSPH4A or sperm-specific component RSPH6A, spoke stalk proteins RSPH14, DNAJB13, DYDC1, ROPN1L and NME5, and the RS1 complex-specific anchor protein IQUB. Interacts with IQUB. Interacts with RSPH3B. Interacts with RSPH4A. Interacts with RSPH6A. Interacts with CFAP61. Interacts with LRRC23. As to expression, expressed in the testis, trachea, lung, oviduct and ependymal cells (at protein level).

The protein localises to the cytoplasm. The protein resides in the cytoskeleton. It is found in the cilium axoneme. It localises to the flagellum axoneme. Its subcellular location is the cell projection. The protein localises to the kinocilium. Functionally, functions as part of axonemal radial spoke complexes that play an important part in the motility of sperm and cilia. Essential for both the radial spoke head assembly and the central pair microtubule stability in ependymal motile cilia. Required for motility of olfactory and neural cilia and for the structural integrity of ciliary axonemes in both 9+0 and 9+2 motile cilia. This Mus musculus (Mouse) protein is Radial spoke head protein 9 homolog (Rsph9).